Consider the following 131-residue polypeptide: Large ribosomal subunit protein bL17 (131 aa).

This sequence belongs to the bacterial ribosomal protein bL17 family. Part of the 50S ribosomal subunit. Contacts protein L32.

This Thermotoga neapolitana (strain ATCC 49049 / DSM 4359 / NBRC 107923 / NS-E) protein is Large ribosomal subunit protein bL17.